Reading from the N-terminus, the 546-residue chain is Intermembrane transport protein PqiB (546 aa).

Residues 1 to 15 lie on the Cytoplasmic side of the membrane; that stretch reads MESNNGEAKIQKVKN. A helical membrane pass occupies residues 16-36; sequence WSPVWIFPIVTALIGAWVLFY. Residues 37–546 are Periplasmic-facing; that stretch reads HYSHQGPEVT…KDPEPKRAKQ (510 aa). MCE/MlaD regions lie at residues 42 to 133, 158 to 217, and 285 to 389; these read GPEV…LQPG, IRVI…NNVR, and HIDY…LDFY. Residues 437–464 are a coiled coil; sequence IEQATSTLSESQRTMKNLQTTLDSMNKI.

This sequence belongs to the PqiB family. As to quaternary structure, homohexamer. May form a complex composed of PqiA, PqiB and PqiC. Interacts with PqiC.

The protein localises to the cell inner membrane. Its function is as follows. Forms a tunnel that spans the entire periplasmic space. Could be implicated in lipid transport between the inner membrane and the outer membrane. Binds phospholipids. Required for outer membrane homeostasis. Contributes to membrane integrity. This chain is Intermembrane transport protein PqiB, found in Escherichia coli (strain K12).